The sequence spans 148 residues: MPTFKLVLSDPMSGKARQFEIKDPLAQRFIGLKIGDELDGVILKDLIELPKGAKIRITGGSGIEGAPMHPGVPGPVKKYILADGPPGYWPPKKGMKKKKLVRGNTISDSIVQINAVIVYPKDYTGPPAIPLGAKELEKEKKAEEAPAQ.

It belongs to the eukaryotic ribosomal protein eS6 family.

This is Small ribosomal subunit protein eS6 from Pyrobaculum aerophilum (strain ATCC 51768 / DSM 7523 / JCM 9630 / CIP 104966 / NBRC 100827 / IM2).